The primary structure comprises 691 residues: Histone-lysine N-methyltransferase Set8 (691 aa).

Disordered regions lie at residues 1–22 (MIMVRRRARPAKETGGGSAAAA), 211–234 (RSGLRDSHSSSHSSSSSGGASATT), 345–381 (PAAGGGAGAAARRRKPATPHRILCPSPIKTLPRGDGG), 422–450 (SRRRLNQPKPQAPYQPQQPQPPPGTQPTN), and 484–516 (APAKPRAALTKGSKTKTGSKIQPGPLPLAATNG). The span at 220-232 (SSHSSSSSGGASA) shows a compositional bias: low complexity. The span at 431 to 446 (PQAPYQPQQPQPPPGT) shows a compositional bias: pro residues. Positions 484-503 (APAKPRAALTKGSKTKTGSK) are enriched in low complexity. An SET domain is found at 555 to 676 (EGLQVRNFMG…PGEELTYDYG (122 aa)). S-adenosyl-L-methionine is bound by residues 565–567 (KGR), Tyr-610, and 637–638 (NH).

It belongs to the class V-like SAM-binding methyltransferase superfamily. Histone-lysine methyltransferase family. PR/SET subfamily.

It is found in the nucleus. It localises to the chromosome. It carries out the reaction L-lysyl(20)-[histone H4] + S-adenosyl-L-methionine = N(6)-methyl-L-lysyl(20)-[histone H4] + S-adenosyl-L-homocysteine + H(+). Functionally, histone methyltransferase that specifically monomethylates 'Lys-20' of histone H4. H4 'Lys-20' monomethylation is enriched during mitosis and represents a specific tag for epigenetic transcriptional repression. Mainly functions in euchromatin regions, thereby playing a central role in the silencing of euchromatic genes. Required for cell proliferation, possibly by contributing to the maintenance of proper higher-order structure of DNA and chromosome condensation during mitosis. This Drosophila pseudoobscura pseudoobscura (Fruit fly) protein is Histone-lysine N-methyltransferase Set8.